The primary structure comprises 547 residues: Cellodextrinase (547 aa).

Asp148 serves as the catalytic Nucleophile. Catalysis depends on residues His474, Asp520, and Glu529.

Belongs to the glycosyl hydrolase 9 (cellulase E) family.

It localises to the secreted. It carries out the reaction Endohydrolysis of (1-&gt;4)-beta-D-glucosidic linkages in cellulose, lichenin and cereal beta-D-glucans.. With respect to regulation, is not inhibited by methylcellulose. In terms of biological role, glycoside hydrolase that rapidly hydrolyzes short-chain cellodextrins to yield either cellobiose or cellobiose and glucose as end products; cellobiose is not hydrolyzed further. Also shows limited activity against endoglucanase specific substrates (carboxymethylcellulose (CMC), lichenan, laminarin and xylan). This chain is Cellodextrinase, found in Butyrivibrio fibrisolvens.